The primary structure comprises 802 residues: G-type lectin S-receptor-like serine/threonine-protein kinase At1g61550 (802 aa).

The N-terminal stretch at 1-19 (MTRFACFLFSTLLLSFSYA) is a signal peptide. The region spanning 20–139 (AITPTSPLSI…VSGITLWQSF (120 aa)) is the Bulb-type lectin domain. Topologically, residues 20-421 (AITPTSPLSI…EMGGNQRKKT (402 aa)) are extracellular. N-linked (GlcNAc...) asparagine glycans are attached at residues asparagine 48, asparagine 89, asparagine 112, asparagine 231, and asparagine 262. The EGF-like domain occupies 273 to 309 (PANTCDFYGVCGPFGLCVMSIPPKCKCFKGFVPQFSE). 2 disulfide bridges follow: cysteine 277–cysteine 289 and cysteine 283–cysteine 297. N-linked (GlcNAc...) asparagine glycosylation is found at asparagine 315, asparagine 331, and asparagine 370. Residues 328 to 410 (CQGNSTGRHV…GELLSIRLAS (83 aa)) form the PAN domain. Disulfide bonds link cysteine 363-cysteine 384 and cysteine 367-cysteine 373. Residues 422–442 (IIASIVSISLFVTLASAAFGF) form a helical membrane-spanning segment. Topologically, residues 443-802 (WRYRLKHNAI…EVTQSVVLGR (360 aa)) are cytoplasmic. The 286-residue stretch at 489-774 (FSLVNKLGQG…DLPLPKEPTF (286 aa)) folds into the Protein kinase domain. Residues 495–503 (LGQGGFGPV) and lysine 517 each bind ATP. Phosphoserine occurs at positions 523 and 538. The interval 578–595 (RKRVEIDWPKRFSIIQGI) is caM-binding. Aspartate 614 acts as the Proton acceptor in catalysis. 2 positions are modified to phosphoserine: serine 618 and serine 631. Threonine 648 carries the post-translational modification Phosphothreonine. Serine 691 is modified (phosphoserine).

The protein belongs to the protein kinase superfamily. Ser/Thr protein kinase family.

The protein localises to the cell membrane. It carries out the reaction L-seryl-[protein] + ATP = O-phospho-L-seryl-[protein] + ADP + H(+). The enzyme catalyses L-threonyl-[protein] + ATP = O-phospho-L-threonyl-[protein] + ADP + H(+). This chain is G-type lectin S-receptor-like serine/threonine-protein kinase At1g61550, found in Arabidopsis thaliana (Mouse-ear cress).